We begin with the raw amino-acid sequence, 441 residues long: Velvet complex subunit B (441 aa).

Polar residues-rich tracts occupy residues 1 to 14 and 60 to 75; these read MNPGYSSTASQPGH and MMQQPQDQPAPSSTTE. Positions 1–104 are disordered; that stretch reads MNPGYSSTAS…QPHVGEQDGR (104 aa). The region spanning 100 to 426 is the Velvet domain; it reads EQDGRKYRLD…AGQGIKIPIR (327 aa).

It belongs to the velvet family. VelB subfamily. In terms of assembly, component of the heterotrimeric velvet complex composed of LAEA, VEA and VELB; VEA acting as a bridging protein between LAEA and VELB. Forms a heterodimeric complex with VOSA; the formation of the VELB-VOSA complex is light-dependent.

The protein localises to the nucleus. It localises to the cytoplasm. Component of the velvet transcription factor complex that controls sexual/asexual developmental ratio in response to light, promoting sexual development in the darkness while stimulating asexual sporulation under illumination. The velvet complex acts as a global regulator for secondary metabolite gene expression. Component of the VELB-VOSA heterodimeric complex that plays a dual role in activating genes associated with spore maturation and repressing certain development-associated genes. The VELB-VOSA complex binds DNA through the DNA-binding domain of VOSA that recognizes an 11-nucleotide consensus sequence 5'-CTGGCCGCGGC-3' consisting of two motifs in the promoters of key developmental regulatory genes. Involved in the regulation of the response to eactive oxygen species (ROS) stress. The protein is Velvet complex subunit B of Pyricularia oryzae (strain 70-15 / ATCC MYA-4617 / FGSC 8958) (Rice blast fungus).